The chain runs to 683 residues: Synaptic vesicle glycoprotein 2B (683 aa).

The interval 1 to 42 (MDDYKYQDNYGGYAPSDGYYRGNESNPEEDAQSDVTEGHDEE) is disordered. Residues 1–108 (MDDYKYQDNY…MDECGHGRFQ (108 aa)) are Cytoplasmic-facing. Ser-33 bears the Phosphoserine mark. Residue Thr-36 is modified to Phosphothreonine. The chain crosses the membrane as a helical span at residues 109–129 (WILFFVLGLALMADGVEVFVV). Residues 130–148 (SFALPSAEKDMCLSSSKKG) lie on the Extracellular side of the membrane. The chain crosses the membrane as a helical span at residues 149 to 169 (MLGMIVYLGMMAGAFILGGLA). The Cytoplasmic portion of the chain corresponds to 170–182 (DKLGRKRVLSMSL). Residues 183 to 203 (AVNASFASLSSFVQGYGAFLF) traverse the membrane as a helical segment. The Extracellular portion of the chain corresponds to 204–205 (CR). The chain crosses the membrane as a helical span at residues 206-226 (LISGIGIGGALPIVFAYFSEF). Residues 227-237 (LSREKRGEHLS) are Cytoplasmic-facing. Residues 238–258 (WLGIFWMTGGLYASAMAWSII) form a helical membrane-spanning segment. Topologically, residues 259–277 (PHYGWGFSMGTNYHFHSWR) are extracellular. A helical transmembrane segment spans residues 278 to 298 (VFVIVCALPCTVSMVALKFMP). Topologically, residues 299–390 (ESPRFLLEMG…CVMGPYRMNT (92 aa)) are cytoplasmic. A helical transmembrane segment spans residues 391-411 (LILAVVWFAMAFSYYGLTVWF). The Extracellular portion of the chain corresponds to 412–535 (PDMIRYFQDE…CHMDLEQDND (124 aa)). Phosphotyrosine is present on Tyr-423. 3 N-linked (GlcNAc...) asparagine glycosylation sites follow: Asn-441, Asn-491, and Asn-516. The helical transmembrane segment at 536-556 (FLIYLVSFLGSLSVLPGNIIS) threads the bilayer. Residues 557–565 (ALLMDRIGR) lie on the Cytoplasmic side of the membrane. The chain crosses the membrane as a helical span at residues 566-586 (LKMIGGSMLISAVCCFFLFFG). Over 587–592 (NSESAM) the chain is Extracellular. A helical transmembrane segment spans residues 593 to 613 (IGWQCLFCGTSIAAWNALDVI). Residues 614–626 (TVELYPTNQRATA) are Cytoplasmic-facing. Residues 627–649 (FGILNGLCKFGAILGNTIFASFV) form a helical membrane-spanning segment. Topologically, residues 650-653 (GITK) are extracellular. A helical transmembrane segment spans residues 654 to 672 (VVPILLAAASLVGGGLIAL). Residues 673–683 (RLPETREQVLM) are Cytoplasmic-facing.

The protein belongs to the major facilitator superfamily. In terms of assembly, interacts with SYT1 in a calcium-independent manner. Forms a complex with SYT1, syntaxin-1 and SNAP25. (Microbial infection) Interacts with C.botulinum neurotoxin type A2 (BoNT/A, botA). Interaction is improved by glycosylation of SV2. N-glycosylated. Post-translationally, the N-terminal cytoplasmic domain is phosphorylated by CK1.

It is found in the cytoplasmic vesicle. Its subcellular location is the secretory vesicle. The protein localises to the synaptic vesicle membrane. The protein resides in the acrosome. Its function is as follows. Probably plays a role in the control of regulated secretion in neural and endocrine cells. In terms of biological role, (Microbial infection) Receptor for the C.botulinum neurotoxin type A2 (BoNT/A, botA); glycosylation is not essential but enhances the interaction. Probably also serves as a receptor for the closely related C.botulinum neurotoxin type A1. The polypeptide is Synaptic vesicle glycoprotein 2B (SV2B) (Homo sapiens (Human)).